The sequence spans 376 residues: Putative clathrin assembly protein At1g25240 (376 aa).

Positions 25–156 constitute an ENTH domain; that stretch reads KTSFRNPDLD…FFLSDQIRRR (132 aa).

It is found in the membrane. It localises to the clathrin-coated pit. The protein localises to the golgi apparatus. Its subcellular location is the cytoplasmic vesicle. The protein resides in the clathrin-coated vesicle. The chain is Putative clathrin assembly protein At1g25240 from Arabidopsis thaliana (Mouse-ear cress).